Consider the following 534-residue polypeptide: Cargo protein 2 (534 aa).

In terms of assembly, homododecamer. Localizes inside the capsid.

It localises to the virion. Its function is as follows. Protein that is stored in high quantity in the viral capsid and may play a role during ejection. This is Cargo protein 2 from Bacteroides intestinalis (Bacteroides phage PhiCrAss001).